Consider the following 301-residue polypeptide: Acetyl-coenzyme A carboxylase carboxyl transferase subunit beta (301 aa).

The 270-residue stretch at valine 23–valine 292 folds into the CoA carboxyltransferase N-terminal domain. Positions 27, 30, 46, and 49 each coordinate Zn(2+). A C4-type zinc finger spans residues cysteine 27–cysteine 49. Residues leucine 280–alanine 301 are disordered.

The protein belongs to the AccD/PCCB family. Acetyl-CoA carboxylase is a heterohexamer composed of biotin carboxyl carrier protein (AccB), biotin carboxylase (AccC) and two subunits each of ACCase subunit alpha (AccA) and ACCase subunit beta (AccD). Zn(2+) serves as cofactor.

It localises to the cytoplasm. The enzyme catalyses N(6)-carboxybiotinyl-L-lysyl-[protein] + acetyl-CoA = N(6)-biotinyl-L-lysyl-[protein] + malonyl-CoA. It functions in the pathway lipid metabolism; malonyl-CoA biosynthesis; malonyl-CoA from acetyl-CoA: step 1/1. In terms of biological role, component of the acetyl coenzyme A carboxylase (ACC) complex. Biotin carboxylase (BC) catalyzes the carboxylation of biotin on its carrier protein (BCCP) and then the CO(2) group is transferred by the transcarboxylase to acetyl-CoA to form malonyl-CoA. The sequence is that of Acetyl-coenzyme A carboxylase carboxyl transferase subunit beta from Enterobacter sp. (strain 638).